A 490-amino-acid polypeptide reads, in one-letter code: MESRKNSDRQMRRANCFSAGERMKTRSPSVIVIGGGFGGISAARTLQDASFQVMVLESRDRIGGRVHTDYSFGFPVDLGASWLHGVCKENPLAPVIGRLGLPLYRTSGDNSVLYDHDLESYALFDMDGNQVPQELVTQIGVTFERILEEINKVRDEQDADISISQAFSIVFSRKPELRLEGLAHNVLQWYVCRMEGWFAADAETISAKCWDQEELLPGGHGLMVRGYRPVINTLAKGLDIRVGHRVTKIVRRYNGVKVTTENGQTFVADAAVIAVPLGVLKSGTIKFEPKLPEWKQEAINDLGVGIENKIILHFEKVFWPKVEFLGVVAETSYGCSYFLNLHKATGHPVLVYMPAGQLAKDIEKMSDEAAANFAVLQLQRILPDALPPVQYLVSRWGSDVNSMGSYSYDIVGKPHDLYERLRVPVDNLFFAGEATSSSFPGSVHGAYSTGLMAAEDCRMRVLERYGELDLFQPVMGEEGPASVPLLISRL.

Residues E57, R65, V246, and E433 each contribute to the FAD site. The Microbody targeting signal motif lies at 488–490; the sequence is SRL.

Belongs to the flavin monoamine oxidase family. It depends on FAD as a cofactor. In terms of tissue distribution, highly expressed in flowers and siliques. Also found in leaf and stem and in low levels in cotyledons, roots and in seedlings.

The protein localises to the peroxisome. The catalysed reaction is spermine + O2 + H2O = 3-aminopropanal + spermidine + H2O2. The enzyme catalyses N(1)-acetylspermine + O2 + H2O = 3-acetamidopropanal + spermidine + H2O2. It catalyses the reaction spermidine + O2 + H2O = 3-aminopropanal + putrescine + H2O2. The protein operates within amine and polyamine degradation; spermine degradation. It participates in amine and polyamine degradation; spermidine degradation. In terms of biological role, flavoenzyme involved in polyamine back-conversion. Catalyzes the oxidation of the secondary amino group of polyamines, such as spermine, spermidine and their acetyl derivatives. Substrate preference is N(1)-acetylspermine &gt; spermine &gt; spermidine. Plays an important role in the regulation of polyamine intracellular concentration. Involved in abscisic acid-mediated developmental processes. May contribute to nitric oxide-mediated effects on root growth. The polypeptide is Polyamine oxidase 2 (Arabidopsis thaliana (Mouse-ear cress)).